The primary structure comprises 454 residues: Natural cytotoxicity triggering receptor 3 ligand 1 (454 aa).

A signal peptide spans 1–24 (MTWRAAASTCAALLILLWALTTEG). Topologically, residues 25-262 (DLKVEMMAGG…SETEKTDNFS (238 aa)) are extracellular. An Ig-like V-type domain is found at 27–138 (KVEMMAGGTQ…LKAQGTVQLE (112 aa)). N-linked (GlcNAc...) asparagine glycosylation is found at Asn43 and Asn57. An intrachain disulfide couples Cys48 to Cys122. 2 interaction with NCR3 regions span residues 59–62 (TSMG) and 127–130 (TPLK). The 102-residue stretch at 143-244 (PASRLLLDQV…LHTPLRSNFT (102 aa)) folds into the Ig-like C1-type domain. A disulfide bridge links Cys163 with Cys228. Asn174, Asn208, Asn216, Asn242, and Asn260 each carry an N-linked (GlcNAc...) asparagine glycan. A helical transmembrane segment spans residues 263-283 (IHWWPISFIGVGLVLLIVLIP). The Cytoplasmic portion of the chain corresponds to 284 to 454 (WKKICNKSSS…QPPTLLLPLQ (171 aa)). The retroviral-Gag-like stretch occupies residues 291 to 429 (SSSAYTPLKC…APILPVSPIW (139 aa)). The tract at residues 395–454 (GKSIDDNSTKSEKQTPREHSDAVPDAPILPVSPIWEPPPATTSTTPVLSSQPPTLLLPLQ) is disordered. Basic and acidic residues predominate over residues 397-416 (SIDDNSTKSEKQTPREHSDA). Positions 435-454 (TTSTTPVLSSQPPTLLLPLQ) are enriched in low complexity.

As to quaternary structure, monomer. Interacts specifically with NCR3, but not with other natural killer cell-activating receptors, including NCR1, NCR2 and KLRK1. As to expression, not detected in any normal tissue tested. Expressed at the surface of several tumor cell lines including T and B-lymphomas, myeloid leukemias, melanomas, carcinomas and large T SV40 antigen-transformed cells (at protein level).

The protein resides in the cell membrane. Its function is as follows. Triggers NCR3-dependent natural killer cell activation. This is Natural cytotoxicity triggering receptor 3 ligand 1 (NCR3LG1) from Homo sapiens (Human).